The primary structure comprises 420 residues: Tyrosine--tRNA ligase (420 aa).

Position 33 (Tyr33) interacts with L-tyrosine. A 'HIGH' region motif is present at residues 38 to 47 (PTGPSLHAGH). Positions 167 and 171 each coordinate L-tyrosine. Residues 227–231 (KFGKS) carry the 'KMSKS' region motif. Lys230 is a binding site for ATP. An S4 RNA-binding domain is found at 352–418 (RTIIDLLVAS…GKKNFAGVQI (67 aa)).

This sequence belongs to the class-I aminoacyl-tRNA synthetase family. TyrS type 1 subfamily. Homodimer.

It localises to the cytoplasm. It carries out the reaction tRNA(Tyr) + L-tyrosine + ATP = L-tyrosyl-tRNA(Tyr) + AMP + diphosphate + H(+). Catalyzes the attachment of tyrosine to tRNA(Tyr) in a two-step reaction: tyrosine is first activated by ATP to form Tyr-AMP and then transferred to the acceptor end of tRNA(Tyr). This is Tyrosine--tRNA ligase from Corynebacterium glutamicum (strain ATCC 13032 / DSM 20300 / JCM 1318 / BCRC 11384 / CCUG 27702 / LMG 3730 / NBRC 12168 / NCIMB 10025 / NRRL B-2784 / 534).